The chain runs to 429 residues: Glutamate-1-semialdehyde 2,1-aminomutase (429 aa).

Lys265 carries the N6-(pyridoxal phosphate)lysine modification.

The protein belongs to the class-III pyridoxal-phosphate-dependent aminotransferase family. HemL subfamily. As to quaternary structure, homodimer. The cofactor is pyridoxal 5'-phosphate.

The protein localises to the cytoplasm. The catalysed reaction is (S)-4-amino-5-oxopentanoate = 5-aminolevulinate. It functions in the pathway porphyrin-containing compound metabolism; protoporphyrin-IX biosynthesis; 5-aminolevulinate from L-glutamyl-tRNA(Glu): step 2/2. The sequence is that of Glutamate-1-semialdehyde 2,1-aminomutase from Alkalilimnicola ehrlichii (strain ATCC BAA-1101 / DSM 17681 / MLHE-1).